Consider the following 62-residue polypeptide: Conotoxin Sr5.6 (62 aa).

Positions 1-22 (MRCLPVFVILLLLIASASSVDA) are cleaved as a signal peptide. A propeptide spanning residues 23 to 44 (QLKTKDDVPLTSVHDNAKGTQH) is cleaved from the precursor. Pro61 carries the post-translational modification Proline amide.

This sequence belongs to the conotoxin T superfamily. Contains 2 disulfide bonds that can be either 'C1-C3, C2-C4' or 'C1-C4, C2-C3', since these disulfide connectivities have been observed for conotoxins with cysteine framework V (for examples, see AC P0DQQ7 and AC P81755). As to expression, expressed by the venom duct.

It localises to the secreted. This Conus spurius (Alphabet cone) protein is Conotoxin Sr5.6.